A 258-amino-acid polypeptide reads, in one-letter code: Trans-aconitate 2-methyltransferase (258 aa).

Belongs to the methyltransferase superfamily. Tam family.

It localises to the cytoplasm. The enzyme catalyses trans-aconitate + S-adenosyl-L-methionine = (E)-3-(methoxycarbonyl)pent-2-enedioate + S-adenosyl-L-homocysteine. Functionally, catalyzes the S-adenosylmethionine monomethyl esterification of trans-aconitate. The polypeptide is Trans-aconitate 2-methyltransferase (Acidovorax sp. (strain JS42)).